The primary structure comprises 270 residues: Myelin protein zero-like protein 1 (270 aa).

An N-terminal signal peptide occupies residues 1-35; it reads MAEAVGAVALIAAPARRRWLWSVLAAMLGLLTARI. The 116-residue stretch at 36–151 folds into the Ig-like V-type domain; sequence SALEVHTPKE…DIVVRPGHIR (116 aa). Topologically, residues 36-162 are extracellular; it reads SALEVHTPKE…HVVEIDNLLV (127 aa). N-linked (GlcNAc...) asparagine glycans are attached at residues Asn50 and Asn130. Cys58 and Cys135 are joined by a disulfide. The chain crosses the membrane as a helical span at residues 163-183; the sequence is FLVWVVVGTVTAVVLGLTLLI. The Cytoplasmic segment spans residues 184–270; sequence SLVLVVLYRR…SVVYADIRKD (87 aa). The interval 201-257 is disordered; the sequence is TGCSTSERLSPVKQAPRKCPSDTEGLVKSPPSAGSHQGPVIYAQLDHSGGHHSGKIN. Residues Ser204, Ser206, Ser210, and Ser221 each carry the phosphoserine modification. The ITIM motif 1 signature appears at 240–245; that stretch reads VIYAQL. Tyr242 carries the phosphotyrosine modification. Ser261 is subject to Phosphoserine. The short motif at 262–267 is the ITIM motif 2 element; the sequence is VVYADI. Position 264 is a phosphotyrosine (Tyr264).

Belongs to the myelin P0 protein family. Interacts with phosphorylated PTPN11/SHP-2. Post-translationally, phosphorylated on tyrosine residues upon stimulation with pervanadate and concanavalin-A (ConA). Phosphorylation at Tyr-242 and Tyr-264 is required for interaction with PTPN11/SHP-2. Dephosphorylated by PTPN11/SHP-2 (in vitro).

It is found in the membrane. Functionally, cell surface receptor, which is involved in signal transduction processes. Recruits PTPN11/SHP-2 to the cell membrane and is a putative substrate of PTPN11/SHP-2. Is a major receptor for concanavalin-A (ConA) and is involved in cellular signaling induced by ConA, which probably includes Src family tyrosine-protein kinases. Isoform 2 seems to have a dominant negative role; it blocks tyrosine phosphorylation of MPZL1 induced by ConA. Isoform 1, but not isoform 2, may be involved in regulation of integrin-mediated cell motility. This chain is Myelin protein zero-like protein 1 (Mpzl1), found in Mus musculus (Mouse).